Reading from the N-terminus, the 250-residue chain is MNPIAFHVGNLAIRWYGVIISIGAALGLLLAMYNCKIREASYDEFINMFLIAFPSAIIGARLYYVIFEFEDYRDNLINIFNTRQGGLAIHGGIIFGVLAVYIYLKYRKESFFEYVDVAAPSIILGQAIGRWGNFFNSEAHGGPVTKEFISKFPQFIQKGMFIEGTYYHPTFLYESIWNFIVCIFLVYLLKKTKKKGIVFMAYIGLYSLGRFFIEGLRTDSLYLGSIRVAQLISVLGIILSIFFIYNIIKN.

4 helical membrane passes run 11–31, 49–69, 84–104, and 109–129; these read LAIR…LLLA, FLIA…IFEF, QGGL…YIYL, and ESFF…QAIG. Arginine 130 lines the a 1,2-diacyl-sn-glycero-3-phospho-(1'-sn-glycerol) pocket. 3 helical membrane-spanning segments follow: residues 169–189, 196–216, and 228–248; these read PTFL…VYLL, GIVF…IEGL, and VAQL…YNII.

The protein belongs to the Lgt family.

Its subcellular location is the cell membrane. The catalysed reaction is L-cysteinyl-[prolipoprotein] + a 1,2-diacyl-sn-glycero-3-phospho-(1'-sn-glycerol) = an S-1,2-diacyl-sn-glyceryl-L-cysteinyl-[prolipoprotein] + sn-glycerol 1-phosphate + H(+). Its pathway is protein modification; lipoprotein biosynthesis (diacylglyceryl transfer). Functionally, catalyzes the transfer of the diacylglyceryl group from phosphatidylglycerol to the sulfhydryl group of the N-terminal cysteine of a prolipoprotein, the first step in the formation of mature lipoproteins. This Clostridium botulinum (strain 657 / Type Ba4) protein is Phosphatidylglycerol--prolipoprotein diacylglyceryl transferase.